Here is a 150-residue protein sequence, read N- to C-terminus: Aspartate 1-decarboxylase 2 (150 aa).

The active-site Schiff-base intermediate with substrate; via pyruvic acid is S24. Residue S24 is modified to Pyruvic acid (Ser). T56 is a substrate binding site. Y57 acts as the Proton donor in catalysis. A substrate-binding site is contributed by 72-74 (GAA).

Belongs to the PanD family. In terms of assembly, heterooctamer of four alpha and four beta subunits. Pyruvate serves as cofactor. Post-translationally, is synthesized initially as an inactive proenzyme, which is activated by self-cleavage at a specific serine bond to produce a beta-subunit with a hydroxyl group at its C-terminus and an alpha-subunit with a pyruvoyl group at its N-terminus.

The protein resides in the cytoplasm. The enzyme catalyses L-aspartate + H(+) = beta-alanine + CO2. Its pathway is cofactor biosynthesis; (R)-pantothenate biosynthesis; beta-alanine from L-aspartate: step 1/1. Its function is as follows. Catalyzes the pyruvoyl-dependent decarboxylation of aspartate to produce beta-alanine. The protein is Aspartate 1-decarboxylase 2 of Mesorhizobium japonicum (strain LMG 29417 / CECT 9101 / MAFF 303099) (Mesorhizobium loti (strain MAFF 303099)).